The primary structure comprises 239 residues: LexA repressor (239 aa).

The segment at residues 26-46 is a DNA-binding region (H-T-H motif); that stretch reads FDEMKDALDLASKSGIHRLIT. Catalysis depends on for autocatalytic cleavage activity residues Ser-159 and Lys-197.

This sequence belongs to the peptidase S24 family. As to quaternary structure, homodimer.

The catalysed reaction is Hydrolysis of Ala-|-Gly bond in repressor LexA.. Represses a number of genes involved in the response to DNA damage (SOS response), including recA and lexA. In the presence of single-stranded DNA, RecA interacts with LexA causing an autocatalytic cleavage which disrupts the DNA-binding part of LexA, leading to derepression of the SOS regulon and eventually DNA repair. This Rhizobium etli (strain CIAT 652) protein is LexA repressor.